A 117-amino-acid polypeptide reads, in one-letter code: Peptidyl-tRNA hydrolase (117 aa).

Belongs to the PTH2 family.

It is found in the cytoplasm. It catalyses the reaction an N-acyl-L-alpha-aminoacyl-tRNA + H2O = an N-acyl-L-amino acid + a tRNA + H(+). Functionally, the natural substrate for this enzyme may be peptidyl-tRNAs which drop off the ribosome during protein synthesis. The chain is Peptidyl-tRNA hydrolase from Thermoplasma acidophilum (strain ATCC 25905 / DSM 1728 / JCM 9062 / NBRC 15155 / AMRC-C165).